A 1157-amino-acid polypeptide reads, in one-letter code: Probable inactive leucine-rich repeat receptor kinase XIAO (1157 aa).

Positions 1-21 are cleaved as a signal peptide; that stretch reads MPPPPRLLFLLVMLLVVAAPG. N-linked (GlcNAc...) asparagine glycosylation is present at Asn-58. LRR repeat units lie at residues 101-125, 127-149, 150-172, 173-196, 198-220, 221-245, 247-269, 270-293, 296-319, 320-343, 344-367, 368-391, 393-414, 415-439, 440-463, 464-487, 489-511, 513-536, 537-559, 561-583, 584-608, 609-631, 632-656, 658-680, 681-704, and 706-728; these read LVYL…LSRI, SLRA…FLAN, LTNL…VSFP, PSLK…VSAS, TSLQ…SLGT, LQDL…LSNC, ALLH…VAAI, PSLQ…AFGG, NSSL…VSLG, KDLQ…LAGA, GGLT…VGQL, TALQ…IGRC, ALQV…ALGG, LRRL…LGNL, SWLE…LFVL, GNLT…IGNL, ALQS…IGNL, NLRV…LFGL, PQLQ…GFSS, WSLR…TYGY, LPSL…LANC, SNLT…DFAR, LGEL…ISNC, SLVT…LSNL, SKLQ…LAQI, and GMLS…LGSR. A glycan (N-linked (GlcNAc...) asparagine) is linked at Asn-149. N-linked (GlcNAc...) asparagine glycans are attached at residues Asn-192, Asn-204, and Asn-244. Residue Asn-296 is glycosylated (N-linked (GlcNAc...) asparagine). N-linked (GlcNAc...) asparagine glycosylation occurs at Asn-438. Asn-465, Asn-494, and Asn-524 each carry an N-linked (GlcNAc...) asparagine glycan. N-linked (GlcNAc...) asparagine glycosylation is found at Asn-567, Asn-607, Asn-610, Asn-655, Asn-679, Asn-692, and Asn-711. Residues 765-785 traverse the membrane as a helical segment; that stretch reads LALLIGVVAATVLLLVLFCCC. The interval 804 to 825 is disordered; sequence VKKRRRSPGRGSGSSGTSTDSV. One can recognise a Protein kinase domain in the interval 849–1144; that stretch reads FDEENVLSRG…LEGCRVGPDI (296 aa). ATP-binding positions include 855–863, 930–932, 936–939, 980–985, and Asp-998; these read LSRGRHGLV, DYM, NLAT, and DVKPQN.

Belongs to the protein kinase superfamily. Ser/Thr protein kinase family. Expressed in developing culm, coleoptile, primary root, young spikelet, young leaf blade and leaf sheath, floral meristem primordia, stamen primordia, and lemma and palea primordia.

It localises to the cell membrane. Its function is as follows. Functions in the early stages of organ development by regulating cell division rate. Is probably involved in the regulation of a number of cell-cycle genes. May act as regulator of brassinosteroid (BR) signaling and cell-cycle controlling organ growth. The sequence is that of Probable inactive leucine-rich repeat receptor kinase XIAO from Oryza sativa subsp. japonica (Rice).